A 509-amino-acid polypeptide reads, in one-letter code: Coiled-coil domain-containing protein 181 (509 aa).

Disordered stretches follow at residues 27 to 122 (INDK…EDEE) and 287 to 368 (LAQV…NEKK). 2 stretches are compositionally biased toward basic and acidic residues: residues 41 to 58 (ACKK…KETE) and 67 to 82 (DPDK…RRND). Residues 319 to 333 (RIQSAGVSPVTSTYC) are compositionally biased toward polar residues. 2 coiled-coil regions span residues 335-377 (SPRQ…VFKA) and 418-488 (LKKK…RSKQ). Residues 337–368 (RQKELQKQLERKRERLKREEEQRKLEEENEKK) are compositionally biased toward basic and acidic residues.

It belongs to the CCDC181 family. In terms of assembly, homodimer. Interacts with HOOK1. Interacts with HOOK2. Interacts with HOOK3.

It is found in the cytoplasm. The protein resides in the cytoskeleton. Its subcellular location is the cell projection. It localises to the cilium. The protein localises to the flagellum. Its function is as follows. Microtubule-binding protein that localizes to the microtubular manchette of elongating spermatids. The chain is Coiled-coil domain-containing protein 181 from Rattus norvegicus (Rat).